We begin with the raw amino-acid sequence, 2596 residues long: Protein unc-79 homolog (2596 aa).

Phosphoserine is present on residues Ser754 and Ser758. 6 disordered regions span residues 907–931 (GPEG…TVPS), 1539–1573 (SQRQ…GFQE), 1594–1632 (VDSP…DSDS), 1648–1679 (EEEE…SVLS), 1695–1832 (KDFS…FKIQ), and 1863–1909 (LGEQ…KQIQ). Residues 1594–1606 (VDSPGKPAPREDL) show a composition bias toward basic and acidic residues. Over residues 1662 to 1679 (GNNAASSPSIPSQPSVLS) the composition is skewed to low complexity. The span at 1704-1713 (NHQSASNEDS) shows a compositional bias: polar residues. Basic and acidic residues predominate over residues 1726–1735 (ELSKSEELRE). The span at 1897–1908 (ETSSHSSISKQI) shows a compositional bias: polar residues. The next 2 membrane-spanning stretches (helical) occupy residues 2184–2204 (LLSF…ELCG) and 2426–2446 (CVLH…WTVY).

The protein belongs to the unc-79 family. In terms of assembly, NALCN complex consists of NALCN and auxiliary subunits, UNC79, UNC80 and NACL1. These auxiliary subunits are essential for the NALCN channel function. UNC80 bridges NALCN to UNC79. Interacts with NALCN. Interacts with UNC80.

It is found in the cell membrane. Functionally, auxiliary subunit of the NALCN sodium channel complex. The NALCN sodium channel complex is a voltage-gated ion channel responsible for the resting Na(+) permeability that controls neuronal excitability. Activated by neuropeptides substance P, neurotensin, and extracellular calcium that regulates neuronal excitability by controlling the sizes of NALCN-dependent sodium-leak current. The polypeptide is Protein unc-79 homolog (Unc79) (Mus musculus (Mouse)).